A 286-amino-acid polypeptide reads, in one-letter code: uncharacterized protein (286 aa).

Residues 8 to 28 form a helical membrane-spanning segment; the sequence is PLSGFISSLIWWLLFFYLIMA.

The protein to M.jannaschii MJ1495.

Its subcellular location is the membrane. This is an uncharacterized protein from Methanocaldococcus jannaschii (strain ATCC 43067 / DSM 2661 / JAL-1 / JCM 10045 / NBRC 100440) (Methanococcus jannaschii).